The chain runs to 319 residues: Vomeronasal type-1 receptor 51 (319 aa).

At 1-31 the chain is on the extracellular side; it reads MNEILFFSPQPLFSHMMNENSRVHTHSNLRH. A helical transmembrane segment spans residues 32–52; that stretch reads IFFSEIGIGISGNSFLLLFHI. Residues 53–65 lie on the Cytoplasmic side of the membrane; it reads LKFIHGHRSRLSD. Residues 66–86 form a helical membrane-spanning segment; that stretch reads LPIGLLSLIHLLMLLVMAFIA. Residues 87-109 are Extracellular-facing; it reads TDIFISWRGWDDIICKFLVYLYR. Cys101 and Cys188 form a disulfide bridge. Residues 110–130 form a helical membrane-spanning segment; it reads VLRGLSLCTTSMLSVLQAIIL. Topologically, residues 131-150 are cytoplasmic; sequence SPRSSCLAKFKRKSLHHISC. The helical transmembrane segment at 151-171 threads the bilayer; that stretch reads AILFLSVLYMLIGSQLLVSII. Residues 172-203 are Extracellular-facing; it reads ATPNLTTNDFIYVTQSCSILPLSYVMQSMFST. The N-linked (GlcNAc...) asparagine glycan is linked to Asn175. The chain crosses the membrane as a helical span at residues 204–224; that stretch reads LLVIRDVFLISLMVLSTWYMV. At 225–254 the chain is on the cytoplasmic side; that stretch reads ALLCRHRKKTQHLQGISLSPKTSPKQRATQ. The chain crosses the membrane as a helical span at residues 255-275; the sequence is TLLMLMSFFVLMTIYDTIVSC. The Extracellular portion of the chain corresponds to 276-285; that stretch reads SRTMFLNDPT. A helical transmembrane segment spans residues 286-306; sequence SYNMQIFVVHIYATVSPFVFM. The Cytoplasmic portion of the chain corresponds to 307-319; that stretch reads STEKHIVNCLRSV.

This sequence belongs to the G-protein coupled receptor 1 family. As to expression, expressed in a subset of sensory neurons located in the apical layer of the vomeronasal organ.

Its subcellular location is the cell membrane. Functionally, putative pheromone receptor implicated in the regulation of social as well as reproductive behavior. This Mus musculus (Mouse) protein is Vomeronasal type-1 receptor 51 (Vmn1r51).